A 153-amino-acid chain; its full sequence is SsrA-binding protein (153 aa).

It belongs to the SmpB family.

The protein resides in the cytoplasm. Functionally, required for rescue of stalled ribosomes mediated by trans-translation. Binds to transfer-messenger RNA (tmRNA), required for stable association of tmRNA with ribosomes. tmRNA and SmpB together mimic tRNA shape, replacing the anticodon stem-loop with SmpB. tmRNA is encoded by the ssrA gene; the 2 termini fold to resemble tRNA(Ala) and it encodes a 'tag peptide', a short internal open reading frame. During trans-translation Ala-aminoacylated tmRNA acts like a tRNA, entering the A-site of stalled ribosomes, displacing the stalled mRNA. The ribosome then switches to translate the ORF on the tmRNA; the nascent peptide is terminated with the 'tag peptide' encoded by the tmRNA and targeted for degradation. The ribosome is freed to recommence translation, which seems to be the essential function of trans-translation. The sequence is that of SsrA-binding protein from Lactobacillus delbrueckii subsp. bulgaricus (strain ATCC 11842 / DSM 20081 / BCRC 10696 / JCM 1002 / NBRC 13953 / NCIMB 11778 / NCTC 12712 / WDCM 00102 / Lb 14).